A 700-amino-acid chain; its full sequence is Elongation factor G 2 (700 aa).

One can recognise a tr-type G domain in the interval 8–290 (ERYRNIGISA…AVLDFLPSPI (283 aa)). Residues 17–24 (AHIDAGKT), 88–92 (DTPGH), and 142–145 (NKMD) each bind GTP.

Belongs to the TRAFAC class translation factor GTPase superfamily. Classic translation factor GTPase family. EF-G/EF-2 subfamily.

The protein resides in the cytoplasm. Its function is as follows. Catalyzes the GTP-dependent ribosomal translocation step during translation elongation. During this step, the ribosome changes from the pre-translocational (PRE) to the post-translocational (POST) state as the newly formed A-site-bound peptidyl-tRNA and P-site-bound deacylated tRNA move to the P and E sites, respectively. Catalyzes the coordinated movement of the two tRNA molecules, the mRNA and conformational changes in the ribosome. The sequence is that of Elongation factor G 2 from Paraburkholderia xenovorans (strain LB400).